We begin with the raw amino-acid sequence, 118 residues long: Large ribosomal subunit protein bL20 (118 aa).

It belongs to the bacterial ribosomal protein bL20 family.

In terms of biological role, binds directly to 23S ribosomal RNA and is necessary for the in vitro assembly process of the 50S ribosomal subunit. It is not involved in the protein synthesizing functions of that subunit. This Sodalis glossinidius (strain morsitans) protein is Large ribosomal subunit protein bL20.